The primary structure comprises 149 residues: Potassium binding protein Kbp (149 aa).

The BON domain occupies 23–91 (DKDDQAKKVQ…SVDDQVKTAT (69 aa)). Residues 97–146 (QFYTVKSGDTLSAISKQVYGNANLYNKIFEANKPMLKSPDKIYPGQVLRI) form the LysM domain.

The protein resides in the cytoplasm. In terms of biological role, highly specific potassium binding protein that is required for normal growth in the presence of high levels of external K(+). May act as a sensor of cytoplasmic K(+) concentration. The protein is Potassium binding protein Kbp of Escherichia coli O6:H1 (strain CFT073 / ATCC 700928 / UPEC).